Consider the following 286-residue polypeptide: Putative electron transfer flavoprotein subunit YgcQ (286 aa).

225–253 is an FAD binding site; the sequence is VCIVVGASGAAALMAGVRNSKFVVAINHD.

Belongs to the ETF alpha-subunit/FixB family. As to quaternary structure, ygcQ and YgcR form a heterodimer.

May play a role in a redox process. The chain is Putative electron transfer flavoprotein subunit YgcQ (ygcQ) from Escherichia coli (strain K12).